A 209-amino-acid chain; its full sequence is Probable nicotinate-nucleotide adenylyltransferase (209 aa).

This sequence belongs to the NadD family.

The catalysed reaction is nicotinate beta-D-ribonucleotide + ATP + H(+) = deamido-NAD(+) + diphosphate. The protein operates within cofactor biosynthesis; NAD(+) biosynthesis; deamido-NAD(+) from nicotinate D-ribonucleotide: step 1/1. Functionally, catalyzes the reversible adenylation of nicotinate mononucleotide (NaMN) to nicotinic acid adenine dinucleotide (NaAD). The protein is Probable nicotinate-nucleotide adenylyltransferase of Streptococcus pneumoniae serotype 4 (strain ATCC BAA-334 / TIGR4).